Here is a 316-residue protein sequence, read N- to C-terminus: C-type lectin domain family 10 member A (316 aa).

Topologically, residues 1–39 (MTRTYENFQYLENKVKVQGFKNGPLPLQSLLQRLCSGPC) are cytoplasmic. The short motif at 5–8 (YENF) is the Endocytosis signal element. A helical; Signal-anchor for type II membrane protein transmembrane segment spans residues 40–60 (HLLLSLGLGLLLLVIICVVGF). Residues 61-316 (QNSKFQRDLV…GLGQTSQESH (256 aa)) lie on the Extracellular side of the membrane. 2 N-linked (GlcNAc...) asparagine glycosylation sites follow: Asn-78 and Asn-173. A coiled-coil region spans residues 85–176 (AEIQALTSQG…VATLNNNAST (92 aa)). Disulfide bonds link Cys-181–Cys-192, Cys-209–Cys-304, and Cys-282–Cys-296. Residues 188 to 305 (HQDSCYWFSH…CQRPYHWVCE (118 aa)) enclose the C-type lectin domain. The Ca(2+) site is built by Val-218, Asn-220, Glu-224, and Asp-243. A glycoprotein is bound by residues Gln-267 and Asp-269. Residues Asp-269, Asp-270, Glu-280, and Asp-281 each contribute to the Ca(2+) site. Glu-280 contacts a glycoprotein. 2 residues coordinate a glycoprotein: His-286 and Asn-292. Asn-292, Asp-293, and Glu-305 together coordinate Ca(2+).

As to quaternary structure, interacts with A-, B- and C-domain containing PTPRC/CD45 isoforms: isoform 1/CD45ABC, isoform 3/CD45AB, isoform 5/CD45BC and isoform 7/CD45B. Does not interact with PTPRC/CD45 isoform 2/CD45RO, a memory T cell marker. In terms of tissue distribution, expressed in myeloid antigen presenting cells in lymph nodes and skin (at protein level). Expressed in dermal dendritic cells (at protein level).

Its subcellular location is the cell membrane. The protein resides in the early endosome membrane. The protein localises to the lysosome membrane. C-type lectin receptor involved in recognition of N-acetylgalactosamine (GalNAc)-terminated glycans by myeloid antigen presenting cells (APCs). Binds in a Ca(2+)-dependent manner to alpha- and beta-linked GalNAc residues on glycoprotein and glycolipid antigens, including alphaGalNAc- and Galbeta1-&gt;3GalNAc-O-Ser/Thr also known as Tn and T antigens, LacdiNAc epitope GalNAcbeta1-&gt;4GlcNAc and its derivative GalNAcbeta1-&gt;4-(Fucalpha1-&gt;3)GlcNAc, O-linked core 5 and 6 glycans, and GM2 and GD2 gangliosides. Acts as a signaling receptor at the interface of APC-T cell interactions. On immature dendritic cells, recognizes Tn antigen-carrying PTPRC/CD45 receptor on effector T cells and downregulates PTRPN/CD45 phosphatase activity with an impact on T cell activation threshold, cytokine production and proliferation. Modulates dendritic cell maturation toward a tolerogenic phenotype leading to generation of regulatory CD4-positive T cell subset with immune suppressive functions. Acts as an endocytic pattern recognition receptor involved in antitumor immunity. During tumorigenesis, recognizes Tn antigens and its sialylated forms Neu5Ac-Tn and Neu5Gc-Tn expressed on tumor cell mucins. On immature dendritic cells, can internalize Tn-terminated immunogens and target them to endolysosomal compartment for MHC class I and II antigen presentation to CD8-positive and CD4-positive T cells, respectively. This Homo sapiens (Human) protein is C-type lectin domain family 10 member A.